The chain runs to 874 residues: Alanine--tRNA ligase (874 aa).

Zn(2+) contacts are provided by histidine 564, histidine 568, cysteine 665, and histidine 669.

It belongs to the class-II aminoacyl-tRNA synthetase family. It depends on Zn(2+) as a cofactor.

It localises to the cytoplasm. It catalyses the reaction tRNA(Ala) + L-alanine + ATP = L-alanyl-tRNA(Ala) + AMP + diphosphate. In terms of biological role, catalyzes the attachment of alanine to tRNA(Ala) in a two-step reaction: alanine is first activated by ATP to form Ala-AMP and then transferred to the acceptor end of tRNA(Ala). Also edits incorrectly charged Ser-tRNA(Ala) and Gly-tRNA(Ala) via its editing domain. This chain is Alanine--tRNA ligase, found in Paraburkholderia phytofirmans (strain DSM 17436 / LMG 22146 / PsJN) (Burkholderia phytofirmans).